We begin with the raw amino-acid sequence, 239 residues long: MSAPLSVFVTGTDTEIGKTFVSAAMLHGFARHGLRAAALKPIAAGAYERDGVWRNEDADQLDAAANVALPPELRTPFLLKAPAAPHIVAAQEGVTLDLDTIVACHREALTRADVVVVEGVGGFRVPLNDTQDTADLAVALGLPVVLVVGVRLGCISHALLTADAIRQRGLTLAGWVANHVDPAMSFADENVATIRDWLARERRAPLIGRIAHMTPAAPESAAAMLDIAALVESLRTARH.

Glutamate 15–phenylalanine 20 provides a ligand contact to ATP. Threonine 19 is a Mg(2+) binding site. Lysine 40 is an active-site residue. Residues aspartate 57, glutamate 118 to glycine 121, and asparagine 178 to histidine 179 contribute to the ATP site. Aspartate 57 and glutamate 118 together coordinate Mg(2+).

The protein belongs to the dethiobiotin synthetase family. In terms of assembly, homodimer. Mg(2+) is required as a cofactor.

It is found in the cytoplasm. The enzyme catalyses (7R,8S)-7,8-diammoniononanoate + CO2 + ATP = (4R,5S)-dethiobiotin + ADP + phosphate + 3 H(+). It participates in cofactor biosynthesis; biotin biosynthesis; biotin from 7,8-diaminononanoate: step 1/2. Functionally, catalyzes a mechanistically unusual reaction, the ATP-dependent insertion of CO2 between the N7 and N8 nitrogen atoms of 7,8-diaminopelargonic acid (DAPA, also called 7,8-diammoniononanoate) to form a ureido ring. The sequence is that of ATP-dependent dethiobiotin synthetase BioD from Burkholderia orbicola (strain MC0-3).